Here is a 473-residue protein sequence, read N- to C-terminus: Ribulose bisphosphate carboxylase large chain (473 aa).

Substrate contacts are provided by Asn-116 and Thr-166. Lys-168 serves as the catalytic Proton acceptor. Substrate is bound at residue Lys-170. Mg(2+) is bound by residues Lys-194, Asp-196, and Glu-197. An N6-carboxylysine modification is found at Lys-194. His-287 serves as the catalytic Proton acceptor. Residues Arg-288, His-320, and Ser-372 each contribute to the substrate site.

This sequence belongs to the RuBisCO large chain family. Type I subfamily. As to quaternary structure, heterohexadecamer of 8 large chains and 8 small chains. Mg(2+) is required as a cofactor.

The catalysed reaction is 2 (2R)-3-phosphoglycerate + 2 H(+) = D-ribulose 1,5-bisphosphate + CO2 + H2O. It carries out the reaction D-ribulose 1,5-bisphosphate + O2 = 2-phosphoglycolate + (2R)-3-phosphoglycerate + 2 H(+). In terms of biological role, ruBisCO catalyzes two reactions: the carboxylation of D-ribulose 1,5-bisphosphate, the primary event in carbon dioxide fixation, as well as the oxidative fragmentation of the pentose substrate. Both reactions occur simultaneously and in competition at the same active site. In Nitrobacter winogradskyi (Nitrobacter agilis), this protein is Ribulose bisphosphate carboxylase large chain.